The following is a 359-amino-acid chain: DNA replication and repair protein RecF (359 aa).

An ATP-binding site is contributed by 30–37 (GKNGIGKT).

It belongs to the RecF family.

The protein localises to the cytoplasm. The RecF protein is involved in DNA metabolism; it is required for DNA replication and normal SOS inducibility. RecF binds preferentially to single-stranded, linear DNA. It also seems to bind ATP. The protein is DNA replication and repair protein RecF of Flavobacterium johnsoniae (strain ATCC 17061 / DSM 2064 / JCM 8514 / BCRC 14874 / CCUG 350202 / NBRC 14942 / NCIMB 11054 / UW101) (Cytophaga johnsonae).